The sequence spans 732 residues: Protein kinase YpkA (732 aa).

A Protein kinase domain is found at Val-136 to Leu-408. ATP-binding positions include Phe-142–Ser-150 and Lys-163. Asp-270 functions as the Proton acceptor in the catalytic mechanism.

This sequence belongs to the protein kinase superfamily. Ser/Thr protein kinase family.

The protein localises to the secreted. The enzyme catalyses L-seryl-[protein] + ATP = O-phospho-L-seryl-[protein] + ADP + H(+). The catalysed reaction is L-threonyl-[protein] + ATP = O-phospho-L-threonyl-[protein] + ADP + H(+). Acts as a virulence determinant. This is Protein kinase YpkA (ypkA) from Yersinia pseudotuberculosis serotype I (strain IP32953).